The following is a 181-amino-acid chain: Sodium/potassium-transporting ATPase subunit beta-1-interacting protein 3 (181 aa).

A run of 4 helical transmembrane segments spans residues 2–22 (GCCT…LSAL), 35–55 (APIL…FGTI), 62–82 (IMVY…IICF), and 152–172 (VQIL…SISM).

The protein belongs to the NKAIN family. Interacts with ATP1B1. Detected in the brain only and specifically in neurons. Expressed in multiple regions such as cerebral cortex, thalamus, hippocampus, olfactory bulb and brainstem as well as in cerebellum with low expression in granular cell layer.

It is found in the cell membrane. This Mus musculus (Mouse) protein is Sodium/potassium-transporting ATPase subunit beta-1-interacting protein 3 (Nkain3).